The sequence spans 308 residues: Carbonic anhydrase 4 (308 aa).

Positions 1-18 are cleaved as a signal peptide; it reads MQLLFALLALGALRPLAG. Residues 21–281 form the Alpha-carbonic anhydrase domain; the sequence is LHWCYEIQAS…LGDRSVFKSQ (261 aa). Intrachain disulfides connect C24-C34 and C44-C225. An N-linked (GlcNAc...) asparagine glycan is attached at N31. H86 serves as the catalytic Proton donor/acceptor. H113, H115, and H138 together coordinate Zn(2+). N192 carries N-linked (GlcNAc...) asparagine glycosylation. Residue 221–222 coordinates substrate; it reads TT. S280 is lipidated: GPI-anchor amidated serine. Positions 281–308 are cleaved as a propeptide — removed in mature form; that stretch reads QAAGQLLPLPLPTLLVPTLACVMAGLLR.

It belongs to the alpha-carbonic anhydrase family. In terms of assembly, interacts with SLC4A4. Requires Zn(2+) as cofactor.

Its subcellular location is the cell membrane. The enzyme catalyses hydrogencarbonate + H(+) = CO2 + H2O. With respect to regulation, inhibited by acetazolamide. Its function is as follows. Catalyzes the reversible hydration of carbon dioxide into bicarbonate and protons and thus is essential to maintaining intracellular and extracellular pH. May stimulate the sodium/bicarbonate transporter activity of SLC4A4 that acts in pH homeostasis. It is essential for acid overload removal from the retina and retina epithelium, and acid release in the choriocapillaris in the choroid. This is Carbonic anhydrase 4 (CA4) from Oryctolagus cuniculus (Rabbit).